A 122-amino-acid chain; its full sequence is Mth938 domain-containing protein (122 aa).

An MTH138-like domain region spans residues 6-122 (IASLSWGQMK…RVGGVFHSTC (117 aa)).

This sequence belongs to the AAMDC family.

The protein localises to the cytoplasm. In terms of biological role, may play a role in preadipocyte differentiation and adipogenesis. This Bos taurus (Bovine) protein is Mth938 domain-containing protein (AAMDC).